Consider the following 367-residue polypeptide: Phosphoribosylaminoimidazole-succinocarboxamide synthase (367 aa).

Belongs to the SAICAR synthetase family.

It carries out the reaction 5-amino-1-(5-phospho-D-ribosyl)imidazole-4-carboxylate + L-aspartate + ATP = (2S)-2-[5-amino-1-(5-phospho-beta-D-ribosyl)imidazole-4-carboxamido]succinate + ADP + phosphate + 2 H(+). It participates in purine metabolism; IMP biosynthesis via de novo pathway; 5-amino-1-(5-phospho-D-ribosyl)imidazole-4-carboxamide from 5-amino-1-(5-phospho-D-ribosyl)imidazole-4-carboxylate: step 1/2. In Shewanella frigidimarina (strain NCIMB 400), this protein is Phosphoribosylaminoimidazole-succinocarboxamide synthase.